The primary structure comprises 237 residues: MIILPAIDIIDGQAVRLYQGDYNKKEVVANDIFNIAKEFECLGAEYIHLVDLDGAKSGYCVNEKIILKLAQTVDVPIEVGGGIRNFETIEKLIENGISRVILGTIAMEDEGLLKKAIECYGEKISVGIDCKNGYVYGRGWLAESKLNYLDFAKNMESLGVKSIIVTDISKDGTLEGPNFDMLMKLKKLVNIDITASGGIRDIENIKELKNIDIYGAITGKAIYSGNLSLKEAIDITR.

Residue Asp-8 is the Proton acceptor of the active site. Asp-129 functions as the Proton donor in the catalytic mechanism.

It belongs to the HisA/HisF family.

It is found in the cytoplasm. The catalysed reaction is 1-(5-phospho-beta-D-ribosyl)-5-[(5-phospho-beta-D-ribosylamino)methylideneamino]imidazole-4-carboxamide = 5-[(5-phospho-1-deoxy-D-ribulos-1-ylimino)methylamino]-1-(5-phospho-beta-D-ribosyl)imidazole-4-carboxamide. It participates in amino-acid biosynthesis; L-histidine biosynthesis; L-histidine from 5-phospho-alpha-D-ribose 1-diphosphate: step 4/9. This Clostridium botulinum (strain Alaska E43 / Type E3) protein is 1-(5-phosphoribosyl)-5-[(5-phosphoribosylamino)methylideneamino] imidazole-4-carboxamide isomerase.